The sequence spans 645 residues: Cilia- and flagella-associated protein 221 homolog (645 aa).

The tract at residues 381–408 (GGAVHQPSAPVGSSSSGGGGGSDPAFKP) is disordered. Residues 428-435 (THQRLQRR) form an interaction with calmodulin region.

It belongs to the PCDP1 family. In terms of assembly, interacts with calmodulin; calcium-dependent. Part of the PDCP1 complex composed of CFAP46, CFAP54, CFAP74 and CFAP221; the PDCP1 complex binds calmodulin.

Its subcellular location is the cytoplasm. The protein localises to the cytoskeleton. It localises to the cilium axoneme. Functionally, may play a role in cilium morphogenesis. The protein is Cilia- and flagella-associated protein 221 homolog of Chlamydomonas reinhardtii (Chlamydomonas smithii).